A 239-amino-acid chain; its full sequence is DNA repair protein RecO (239 aa).

It belongs to the RecO family.

Involved in DNA repair and RecF pathway recombination. The polypeptide is DNA repair protein RecO (Cereibacter sphaeroides (strain KD131 / KCTC 12085) (Rhodobacter sphaeroides)).